Consider the following 310-residue polypeptide: Ornithine carbamoyltransferase (310 aa).

Carbamoyl phosphate contacts are provided by residues 57–60 (STRT), Gln84, Arg108, and 135–138 (HPCQ). L-ornithine contacts are provided by residues Asn166, Asp229, and 233–234 (SM). Carbamoyl phosphate contacts are provided by residues 269 to 270 (CL) and Arg297.

Belongs to the aspartate/ornithine carbamoyltransferase superfamily. OTCase family.

It is found in the cytoplasm. It catalyses the reaction carbamoyl phosphate + L-ornithine = L-citrulline + phosphate + H(+). It participates in amino-acid biosynthesis; L-arginine biosynthesis; L-arginine from L-ornithine and carbamoyl phosphate: step 1/3. In terms of biological role, reversibly catalyzes the transfer of the carbamoyl group from carbamoyl phosphate (CP) to the N(epsilon) atom of ornithine (ORN) to produce L-citrulline. The sequence is that of Ornithine carbamoyltransferase from Thermosynechococcus vestitus (strain NIES-2133 / IAM M-273 / BP-1).